Reading from the N-terminus, the 130-residue chain is Small ribosomal subunit protein uS8 (130 aa).

It belongs to the universal ribosomal protein uS8 family. Part of the 30S ribosomal subunit.

Its function is as follows. One of the primary rRNA binding proteins, it binds directly to 16S rRNA central domain where it helps coordinate assembly of the platform of the 30S subunit. This Methanococcus voltae protein is Small ribosomal subunit protein uS8.